The following is a 220-amino-acid chain: dITP/XTP pyrophosphatase (220 aa).

13–18 (SHNAGK) contributes to the substrate binding site. Mg(2+) contacts are provided by Asp45 and Asp74. Asp74 acts as the Proton acceptor in catalysis. Residues Ser75, 163–166 (FGYD), Lys186, and 199–200 (HR) contribute to the substrate site.

It belongs to the HAM1 NTPase family. Homodimer. Mg(2+) is required as a cofactor.

The catalysed reaction is XTP + H2O = XMP + diphosphate + H(+). The enzyme catalyses dITP + H2O = dIMP + diphosphate + H(+). It catalyses the reaction ITP + H2O = IMP + diphosphate + H(+). Pyrophosphatase that catalyzes the hydrolysis of nucleoside triphosphates to their monophosphate derivatives, with a high preference for the non-canonical purine nucleotides XTP (xanthosine triphosphate), dITP (deoxyinosine triphosphate) and ITP. Seems to function as a house-cleaning enzyme that removes non-canonical purine nucleotides from the nucleotide pool, thus preventing their incorporation into DNA/RNA and avoiding chromosomal lesions. The chain is dITP/XTP pyrophosphatase from Brucella melitensis biotype 1 (strain ATCC 23456 / CCUG 17765 / NCTC 10094 / 16M).